Consider the following 718-residue polypeptide: NF-kappa-B inhibitor zeta (718 aa).

Residues 1–17 are compositionally biased toward basic and acidic residues; the sequence is MIVDKLLDDSRGGEGLR. Disordered stretches follow at residues 1-20 and 58-108; these read MIVD…RDAA and SAPG…RQQR. Residues 58–83 show a composition bias toward low complexity; that stretch reads SAPGSPGSDSSDFSSASSVSSCGAVE. Over residues 84-97 the composition is skewed to basic and acidic residues; sequence SRSRGGARAERQPV. Residues 108–130 enclose the OCA domain; the sequence is RGPFQGVRVKNSVKELLLHIRSH. Residues 164-179 carry the Nuclear localization signal motif; that stretch reads KRKGPDSLSDGPACKR. The segment at 186 to 211 is disordered; the sequence is QFLTPPQTPTPGESMEDVHLNEPKQE. Basic and acidic residues predominate over residues 201–211; the sequence is EDVHLNEPKQE. The required for transcriptional activity stretch occupies residues 321–394; it reads AYEPNLFDGP…MVGHEMASDS (74 aa). The tract at residues 404-718 is interaction with NFKB1/p50; sequence MGNPMNTTQL…KSIQQRAPPY (315 aa). 7 ANK repeats span residues 443-472, 479-508, 512-541, 551-580, 582-607, 612-641, and 648-681; these read DGDT…ALHM, NGQS…QVNT, WGRT…GSNQ, DGLT…HSPE, QELL…AVEA, SGRT…CLSF, and NGNT…DPST.

In terms of assembly, interacts with NFKB1/p50. Interacts with RELA. Interacts with AKIRIN2. As to expression, expressed at high levels in peripheral blood leukocytes and lung, at moderate levels in liver, placenta, and at low levels in spleen, kidney, skeletal muscle and heart.

It localises to the nucleus. In terms of biological role, involved in regulation of NF-kappa-B transcription factor complexes. Inhibits NF-kappa-B activity without affecting its nuclear translocation upon stimulation. Inhibits DNA-binding of RELA and NFKB1/p50, and of the NF-kappa-B p65-p50 heterodimer and the NF-kappa-B p50-p50 homodimer. Also seems to activate NF-kappa-B-mediated transcription. In vitro, upon association with NFKB1/p50 has transcriptional activation activity and, together with NFKB1/p50 and RELA, is recruited to LCN2 promoters. Promotes transcription of LCN2 and DEFB4. Is recruited to IL-6 promoters and activates IL-6 but decreases TNF-alpha production in response to LPS. Seems to be involved in the induction of inflammatory genes activated through TLR/IL-1 receptor signaling. Involved in the induction of T helper 17 cells (Th17) differentiation upon recognition of antigen by T cell antigen receptor (TCR). This is NF-kappa-B inhibitor zeta (NFKBIZ) from Homo sapiens (Human).